The chain runs to 167 residues: MAPAVATWAPGLWRACNALMAAFFALAAVVQVNDPDAELWVVVYMIPAVLTLLVGFNPLVTGNFIWKSVSAIHMLFCALWAGGLAYHFLLHAKQNLLNEEEGRELSGLVIVTAWMALCHSSSKNPGGGRMHLAIAVVITLLPLLSWVYVHMNKEMRSSWPTHCKTVI.

A run of 5 helical transmembrane segments spans residues 10-30, 40-60, 69-89, 104-122, and 130-150; these read PGLWRACNALMAAFFALAAVV, WVVVYMIPAVLTLLVGFNPLV, VSAIHMLFCALWAGGLAYHFL, ELSGLVIVTAWMALCHSSS, and MHLAIAVVITLLPLLSWVYVH.

The protein resides in the membrane. The protein is Transmembrane protein 220 (Tmem220) of Mus musculus (Mouse).